The primary structure comprises 447 residues: NADP-specific glutamate dehydrogenase (447 aa).

3 residues coordinate substrate: Lys-92, Gln-113, and Lys-116. Lys-128 functions as the Proton donor in the catalytic mechanism. Position 167 (Gly-167) interacts with substrate. Thr-212 and Asn-243 together coordinate NADP(+). Ser-379 provides a ligand contact to substrate.

It belongs to the Glu/Leu/Phe/Val dehydrogenases family. Homohexamer.

It carries out the reaction L-glutamate + NADP(+) + H2O = 2-oxoglutarate + NH4(+) + NADPH + H(+). Its function is as follows. Catalyzes the reversible oxidative deamination of glutamate to alpha-ketoglutarate and ammonia. The protein is NADP-specific glutamate dehydrogenase (gdh) of Corynebacterium glutamicum (strain ATCC 13032 / DSM 20300 / JCM 1318 / BCRC 11384 / CCUG 27702 / LMG 3730 / NBRC 12168 / NCIMB 10025 / NRRL B-2784 / 534).